The chain runs to 384 residues: Chorismate synthase (384 aa).

NADP(+) contacts are provided by arginine 39 and arginine 45. Residues 130-132 (RSS), 248-249 (NA), glycine 292, 307-311 (KPIPT), and arginine 333 contribute to the FMN site.

Belongs to the chorismate synthase family. Homotetramer. The cofactor is FMNH2.

It carries out the reaction 5-O-(1-carboxyvinyl)-3-phosphoshikimate = chorismate + phosphate. Its pathway is metabolic intermediate biosynthesis; chorismate biosynthesis; chorismate from D-erythrose 4-phosphate and phosphoenolpyruvate: step 7/7. Catalyzes the anti-1,4-elimination of the C-3 phosphate and the C-6 proR hydrogen from 5-enolpyruvylshikimate-3-phosphate (EPSP) to yield chorismate, which is the branch point compound that serves as the starting substrate for the three terminal pathways of aromatic amino acid biosynthesis. This reaction introduces a second double bond into the aromatic ring system. The chain is Chorismate synthase from Exiguobacterium sibiricum (strain DSM 17290 / CCUG 55495 / CIP 109462 / JCM 13490 / 255-15).